A 506-amino-acid chain; its full sequence is Protein MGF 505-9R (506 aa).

ANK repeat units lie at residues 54–83 (SIHK…NLKY), 253–283 (QVDT…EIVE), and 313–343 (FVKK…KINL).

Belongs to the asfivirus MGF 505 family.

Functionally, plays a role in virus cell tropism, and may be required for efficient virus replication in macrophages. The sequence is that of Protein MGF 505-9R from African swine fever virus (isolate Tick/Malawi/Lil 20-1/1983) (ASFV).